The chain runs to 271 residues: Catechol O-methyltransferase (271 aa).

Residues 1–6 are Cytoplasmic-facing; sequence MPEAPP. Residues 7 to 26 traverse the membrane as a helical; Signal-anchor for type II membrane protein segment; the sequence is LLLAAVLLGLVLLVVLLLLL. Residues 27-271 are Extracellular-facing; it reads RHWGWGLCLI…YKGPGSEAGP (245 aa). Residues valine 92, glutamate 114, serine 122, glutamate 140, isoleucine 141, 167 to 170, serine 169, and aspartate 191 each bind S-adenosyl-L-methionine; that span reads GASQ. Aspartate 191 provides a ligand contact to Mg(2+). Lysine 194 lines the substrate pocket. Positions 219 and 220 each coordinate Mg(2+). Residues asparagine 220 and glutamate 249 each coordinate substrate. A Phosphoserine modification is found at serine 267.

This sequence belongs to the class I-like SAM-binding methyltransferase superfamily. Cation-dependent O-methyltransferase family. Mg(2+) serves as cofactor. The N-terminus is blocked. Brain, liver, placenta, lymphocytes and erythrocytes.

It is found in the cytoplasm. The protein resides in the cell membrane. The catalysed reaction is a catechol + S-adenosyl-L-methionine = a guaiacol + S-adenosyl-L-homocysteine + H(+). It catalyses the reaction 2-hydroxyestrone + S-adenosyl-L-methionine = 2-hydroxy-3-methoxy-estrone + S-adenosyl-L-homocysteine + H(+). The enzyme catalyses 4-hydroxyestrone + S-adenosyl-L-methionine = 4-methoxyestrone + S-adenosyl-L-homocysteine + H(+). It carries out the reaction 2-hydroxyestrone + S-adenosyl-L-methionine = 2-methoxyestrone + S-adenosyl-L-homocysteine + H(+). The catalysed reaction is 4-hydroxy-17beta-estradiol + S-adenosyl-L-methionine = 4-methoxy-17beta-estradiol + S-adenosyl-L-homocysteine + H(+). It catalyses the reaction 2-hydroxy-17beta-estradiol + S-adenosyl-L-methionine = 2-hydroxy-3-methoxy-17beta-estradiol + S-adenosyl-L-homocysteine + H(+). The enzyme catalyses 2-hydroxy-17beta-estradiol + S-adenosyl-L-methionine = 2-methoxy-17beta-estradiol + S-adenosyl-L-homocysteine + H(+). Catalyzes the O-methylation, and thereby the inactivation, of catecholamine neurotransmitters and catechol hormones. Also shortens the biological half-lives of certain neuroactive drugs, like L-DOPA, alpha-methyl DOPA and isoproterenol. The polypeptide is Catechol O-methyltransferase (Homo sapiens (Human)).